Here is an 83-residue protein sequence, read N- to C-terminus: Toxin To15 (83 aa).

The first 19 residues, M1–G19, serve as a signal peptide directing secretion. In terms of domain architecture, LCN-type CS-alpha/beta spans K21–Y82. Disulfide bonds link C31-C81, C35-C57, C43-C62, and C47-C64.

The protein belongs to the long (4 C-C) scorpion toxin superfamily. Sodium channel inhibitor family. Beta subfamily. Expressed by the venom gland.

The protein localises to the secreted. In terms of biological role, beta toxins bind voltage-independently at site-4 of sodium channels (Nav) and shift the voltage of activation toward more negative potentials thereby affecting sodium channel activation and promoting spontaneous and repetitive firing. The chain is Toxin To15 from Tityus obscurus (Amazonian scorpion).